Here is a 428-residue protein sequence, read N- to C-terminus: Light-independent protochlorophyllide reductase subunit N (428 aa).

Cysteine 29, cysteine 54, and cysteine 115 together coordinate [4Fe-4S] cluster.

The protein belongs to the BchN/ChlN family. Protochlorophyllide reductase is composed of three subunits; BchL, BchN and BchB. Forms a heterotetramer of two BchB and two BchN subunits. Requires [4Fe-4S] cluster as cofactor.

It catalyses the reaction chlorophyllide a + oxidized 2[4Fe-4S]-[ferredoxin] + 2 ADP + 2 phosphate = protochlorophyllide a + reduced 2[4Fe-4S]-[ferredoxin] + 2 ATP + 2 H2O. It participates in porphyrin-containing compound metabolism; bacteriochlorophyll biosynthesis (light-independent). Component of the dark-operative protochlorophyllide reductase (DPOR) that uses Mg-ATP and reduced ferredoxin to reduce ring D of protochlorophyllide (Pchlide) to form chlorophyllide a (Chlide). This reaction is light-independent. The NB-protein (BchN-BchB) is the catalytic component of the complex. This chain is Light-independent protochlorophyllide reductase subunit N, found in Cereibacter sphaeroides (strain KD131 / KCTC 12085) (Rhodobacter sphaeroides).